A 380-amino-acid chain; its full sequence is MPESAEAQVKEALLALLKDRDIQHITMKEIAEKAKVSRGSLYLYYEDKFSIIEDVIEDMKEGLGKALFDAFSHMDTLHLNKKRQTVHPTLSFVHEHRSFFSVMMNRGHFHRFFKDVFQQDVLLAPIHVNLTPIERDIYGHYRALYTYAIILYWLNEDAAASPEAISQKVWELVSQKRFYWLFGKAVPGEREKEKQIDRRVVRTREALQKAFLDVLAEKQDYAGITISDITRKSNIRRATFYDHYANKEELLQTMIQRSCAEIIDHLTIASSPNEFSLKEAEKALAILLSALSNMPIVHFLNREWGVPHVIPDMFKALESFYLHQQTDIHAEKKLYAHYVSAMIIGLLLYRLDEGKAHPPEVLAREFLQFLDVKKYKVVLL.

HTH tetR-type domains lie at 3–63 and 201–262; these read ESAE…KEGL and VRTR…CAEI. A DNA-binding region (H-T-H motif) is located at residues 225–244; the sequence is TISDITRKSNIRRATFYDHY.

This is an uncharacterized protein from Bacillus subtilis (strain 168).